A 370-amino-acid chain; its full sequence is Phospho-N-acetylmuramoyl-pentapeptide-transferase (370 aa).

The next 10 helical transmembrane spans lie at 31–51, 73–93, 98–118, 135–155, 177–197, 209–229, 251–271, 273–293, 298–318, and 347–367; these read LTSM…LYGL, TMGG…WGNL, IIVL…DDYM, LLSI…TGVI, GPVL…IIGS, GLAT…AYVS, VFLS…AHPA, VFMG…IVIL, ILLL…ILQV, and KIVI…LSTL.

This sequence belongs to the glycosyltransferase 4 family. MraY subfamily. Requires Mg(2+) as cofactor.

The protein resides in the cell inner membrane. The catalysed reaction is UDP-N-acetyl-alpha-D-muramoyl-L-alanyl-gamma-D-glutamyl-meso-2,6-diaminopimeloyl-D-alanyl-D-alanine + di-trans,octa-cis-undecaprenyl phosphate = di-trans,octa-cis-undecaprenyl diphospho-N-acetyl-alpha-D-muramoyl-L-alanyl-D-glutamyl-meso-2,6-diaminopimeloyl-D-alanyl-D-alanine + UMP. Its pathway is cell wall biogenesis; peptidoglycan biosynthesis. Its function is as follows. Catalyzes the initial step of the lipid cycle reactions in the biosynthesis of the cell wall peptidoglycan: transfers peptidoglycan precursor phospho-MurNAc-pentapeptide from UDP-MurNAc-pentapeptide onto the lipid carrier undecaprenyl phosphate, yielding undecaprenyl-pyrophosphoryl-MurNAc-pentapeptide, known as lipid I. This Leptospira borgpetersenii serovar Hardjo-bovis (strain JB197) protein is Phospho-N-acetylmuramoyl-pentapeptide-transferase.